A 133-amino-acid polypeptide reads, in one-letter code: Ribosome-binding factor A (133 aa).

It belongs to the RbfA family. Monomer. Binds 30S ribosomal subunits, but not 50S ribosomal subunits or 70S ribosomes.

It is found in the cytoplasm. One of several proteins that assist in the late maturation steps of the functional core of the 30S ribosomal subunit. Associates with free 30S ribosomal subunits (but not with 30S subunits that are part of 70S ribosomes or polysomes). Required for efficient processing of 16S rRNA. May interact with the 5'-terminal helix region of 16S rRNA. The protein is Ribosome-binding factor A of Chelativorans sp. (strain BNC1).